The sequence spans 433 residues: Serine hydroxymethyltransferase (433 aa).

(6S)-5,6,7,8-tetrahydrofolate is bound at residue 121–123; that stretch reads AHV. Lysine 227 carries the post-translational modification N6-(pyridoxal phosphate)lysine. Glutamate 243 is a binding site for (6S)-5,6,7,8-tetrahydrofolate.

The protein belongs to the SHMT family. As to quaternary structure, homodimer. The cofactor is pyridoxal 5'-phosphate.

The protein localises to the cytoplasm. It functions in the pathway amino-acid biosynthesis; glycine biosynthesis; glycine from L-serine: step 1/1. Functionally, catalyzes the reversible interconversion of serine and glycine with a modified folate serving as the one-carbon carrier. Also exhibits a pteridine-independent aldolase activity toward beta-hydroxyamino acids, producing glycine and aldehydes, via a retro-aldol mechanism. This is Serine hydroxymethyltransferase from Saccharolobus islandicus (strain L.S.2.15 / Lassen #1) (Sulfolobus islandicus).